A 212-amino-acid polypeptide reads, in one-letter code: ATP-dependent dethiobiotin synthetase BioD (212 aa).

13–18 lines the ATP pocket; sequence GIGKTV. Thr17 contributes to the Mg(2+) binding site. Lys33 is an active-site residue. Ser37 lines the substrate pocket. Glu100 is a Mg(2+) binding site. Residues 100 to 103 and 184 to 186 each bind ATP; these read EGAG and PLL.

This sequence belongs to the dethiobiotin synthetase family. Homodimer. It depends on Mg(2+) as a cofactor.

The protein localises to the cytoplasm. The catalysed reaction is (7R,8S)-7,8-diammoniononanoate + CO2 + ATP = (4R,5S)-dethiobiotin + ADP + phosphate + 3 H(+). It functions in the pathway cofactor biosynthesis; biotin biosynthesis; biotin from 7,8-diaminononanoate: step 1/2. Its function is as follows. Catalyzes a mechanistically unusual reaction, the ATP-dependent insertion of CO2 between the N7 and N8 nitrogen atoms of 7,8-diaminopelargonic acid (DAPA, also called 7,8-diammoniononanoate) to form a ureido ring. In Brucella melitensis biotype 2 (strain ATCC 23457), this protein is ATP-dependent dethiobiotin synthetase BioD.